We begin with the raw amino-acid sequence, 171 residues long: Tetratricopeptide repeat protein 9C (171 aa).

TPR repeat units lie at residues 8 to 41 (AQLY…LRGL), 72 to 107 (TDCY…QPEN), and 108 to 141 (AKAL…QPKD).

Belongs to the TTC9 family.

The chain is Tetratricopeptide repeat protein 9C (Ttc9c) from Rattus norvegicus (Rat).